Consider the following 211-residue polypeptide: Uridine kinase (211 aa).

Position 15-22 (15-22 (GGSGSGKT)) interacts with ATP.

It belongs to the uridine kinase family.

It localises to the cytoplasm. The catalysed reaction is uridine + ATP = UMP + ADP + H(+). The enzyme catalyses cytidine + ATP = CMP + ADP + H(+). It functions in the pathway pyrimidine metabolism; CTP biosynthesis via salvage pathway; CTP from cytidine: step 1/3. The protein operates within pyrimidine metabolism; UMP biosynthesis via salvage pathway; UMP from uridine: step 1/1. The chain is Uridine kinase from Lactobacillus helveticus (strain DPC 4571).